Reading from the N-terminus, the 230-residue chain is Claudin-2 (230 aa).

At 1–7 the chain is on the cytoplasmic side; the sequence is MASLGLQ. Residues 8–28 traverse the membrane as a helical segment; sequence LVGYVLGLLGLLGTVIAMLLP. Residues 29–81 lie on the Extracellular side of the membrane; the sequence is SWRTSSYVGASIVTAVGFSKGLWMECATHSTGITQCDIYSTMLGLPADIQAAQ. A disulfide bridge links Cys-54 with Cys-64. The chain crosses the membrane as a helical span at residues 82 to 102; the sequence is AMMVTSSAMSSLACIVSVVGM. The Cytoplasmic segment spans residues 103 to 116; it reads RCTVFFQESRAKDR. A helical membrane pass occupies residues 117–137; it reads VAVVGGVFFILGGLLGFIPVA. At 138-162 the chain is on the extracellular side; sequence WNLHGILRDFYSPLVPDSMKFEIGE. A helical membrane pass occupies residues 163 to 183; the sequence is ALYLGIISSLFSLIAGIFLCF. Topologically, residues 184-230 are cytoplasmic; it reads SCSPQGNRSNYYDAYQAQPLATRSSPRPGQAPKGKSEFNSYSLTGYV. Residues 205–230 form a disordered region; sequence TRSSPRPGQAPKGKSEFNSYSLTGYV. Lys-218 is covalently cross-linked (Glycyl lysine isopeptide (Lys-Gly) (interchain with G-Cter in SUMO)). 2 positions are modified to phosphoserine: Ser-219 and Ser-223. Residues 220 to 230 show a composition bias toward polar residues; it reads EFNSYSLTGYV. The tract at residues 229-230 is interaction with TJP1, TJP2 and TJP3; that stretch reads YV.

The protein belongs to the claudin family. In terms of assembly, can form homo- and heteropolymers with other claudins to mediate paracellular barrier and channel functions of tight junctions in response to physiological stimuli. Homopolymers interact with CLDN3, but not CLDN1, homopolymers. Directly interacts with TJP1/ZO-1, TJP2/ZO-2 and TJP3/ZO-3. The disulfide bond is necessary for pore formation, but is not required for correct protein trafficking.

It localises to the cell junction. Its subcellular location is the tight junction. The protein localises to the cell membrane. The enzyme catalyses Na(+)(in) = Na(+)(out). The catalysed reaction is K(+)(in) = K(+)(out). It catalyses the reaction Rb(+)(in) = Rb(+)(out). It carries out the reaction Li(+)(in) = Li(+)(out). The enzyme catalyses Cs(+)(in) = Cs(+)(out). The catalysed reaction is Ca(2+)(in) = Ca(2+)(out). It catalyses the reaction methylamine(out) = methylamine(in). It carries out the reaction choline(out) = choline(in). The enzyme catalyses H2O(in) = H2O(out). Its function is as follows. Forms paracellular channels: polymerizes in tight junction strands with cation- and water-selective channels through the strands, conveying epithelial permeability in a process known as paracellular tight junction permeability. In intestinal epithelium, allows for sodium and water fluxes from the peritoneal side to the lumen of the intestine to regulate nutrient absorption and clear enteric pathogens as part of mucosal immune response. In kidney, allows passive sodium and calcium reabsorption across proximal tubules from the lumen back to the bloodstream. In the hepatobiliary tract, allows paracellular water and cation fluxes in the hepatic perivenous areas and biliary epithelium to generate bile flow and maintain osmotic gradients. This chain is Claudin-2 (CLDN2), found in Bos taurus (Bovine).